A 1165-amino-acid chain; its full sequence is TBC1 domain family member 1 (1165 aa).

At Ser146 the chain carries Phosphoserine. Positions Phe207–Ser234 are disordered. Ser232 carries the post-translational modification Phosphoserine; by PKB/AKT1. Ser234 carries the post-translational modification Phosphoserine; by AMPK. The region spanning Phe243–Gly401 is the PID domain. Ser500 carries the phosphoserine modification. Position 502 is a phosphothreonine; by PKB/AKT1 (Thr502). A phosphoserine mark is found at Ser504, Ser522, Ser524, Ser562, Ser563, Ser567, Ser568, and Ser582. Residue Thr593 is modified to Phosphothreonine. Ser611 carries the phosphoserine modification. At Ser624 the chain carries Phosphoserine; by PKB/AKT1. The interval Ser624 to Val651 is disordered. The span at Thr629–Asp645 shows a compositional bias: basic and acidic residues. 2 positions are modified to phosphoserine: Ser692 and Ser938. One can recognise a Rab-GAP TBC domain in the interval Gly797–Gly991. Tyr949 bears the Phosphotyrosine mark. Residues Gln1146–Asp1165 are disordered.

As to quaternary structure, interacts with APPL2 (via BAR domain); interaction is dependent of TBC1D1 phosphorylation at Ser-232; interaction diminishes the phosphorylation of TBC1D1 at Thr-593, resulting in inhibition of SLC2A4/GLUT4 translocation and glucose uptake. Post-translationally, insulin-stimulated phosphorylation by AKT family kinases stimulates SLC2A4/GLUT4 translocation.

Its subcellular location is the nucleus. Functionally, may act as a GTPase-activating protein for Rab family protein(s). May play a role in the cell cycle and differentiation of various tissues. Involved in the trafficking and translocation of GLUT4-containing vesicles and insulin-stimulated glucose uptake into cells. In Bos taurus (Bovine), this protein is TBC1 domain family member 1 (TBC1D1).